The primary structure comprises 204 residues: Cytochrome bo(3) ubiquinol oxidase subunit 3 (204 aa).

The Cytoplasmic portion of the chain corresponds to 1–31 (MATDTLTHATAHAHEHGHHDAGGTKIFGFWI). Residues 32–50 (YLMSDCILFSILFATYAVL) form a helical membrane-spanning segment. At 51-66 (VNGTAGGPTGKDIFEL) the chain is on the periplasmic side. A helical transmembrane segment spans residues 67-85 (PFVLVETFLLLFSSITYGM). Residues 86–101 (AAIAMYKNNKSQVISW) lie on the Cytoplasmic side of the membrane. Residues 102–120 (LALTWLFGAGFIGMEIYEF) traverse the membrane as a helical segment. Residues 121–142 (HHLIVNGMGPDRSGFLSAFFAL) are Periplasmic-facing. A helical membrane pass occupies residues 143-161 (VGTHGLHVTSGLIWMAVLM). Topologically, residues 162–184 (VQIARRGLTSTNRTRIMCLSLFW) are cytoplasmic. The helical transmembrane segment at 185 to 203 (HFLDVVWICVFTVVYLMGA) threads the bilayer. Methionine 204 is a topological domain (periplasmic).

It belongs to the cytochrome c oxidase subunit 3 family. As to quaternary structure, heterooctamer of two A chains, two B chains, two C chains and two D chains.

The protein localises to the cell inner membrane. Cytochrome bo(3) ubiquinol terminal oxidase is the component of the aerobic respiratory chain of E.coli that predominates when cells are grown at high aeration. Has proton pump activity across the membrane in addition to electron transfer, pumping 2 protons/electron. The sequence is that of Cytochrome bo(3) ubiquinol oxidase subunit 3 (cyoC) from Escherichia coli O6:H1 (strain CFT073 / ATCC 700928 / UPEC).